The primary structure comprises 331 residues: tRNA-cytidine(32) 2-sulfurtransferase (331 aa).

The PP-loop motif motif lies at 71–76 (SGGKDS). 3 residues coordinate [4Fe-4S] cluster: Cys-146, Cys-149, and Cys-237.

It belongs to the TtcA family. In terms of assembly, homodimer. Mg(2+) serves as cofactor. [4Fe-4S] cluster is required as a cofactor.

The protein localises to the cytoplasm. The catalysed reaction is cytidine(32) in tRNA + S-sulfanyl-L-cysteinyl-[cysteine desulfurase] + AH2 + ATP = 2-thiocytidine(32) in tRNA + L-cysteinyl-[cysteine desulfurase] + A + AMP + diphosphate + H(+). Its pathway is tRNA modification. In terms of biological role, catalyzes the ATP-dependent 2-thiolation of cytidine in position 32 of tRNA, to form 2-thiocytidine (s(2)C32). The sulfur atoms are provided by the cysteine/cysteine desulfurase (IscS) system. The polypeptide is tRNA-cytidine(32) 2-sulfurtransferase (Burkholderia multivorans (strain ATCC 17616 / 249)).